Reading from the N-terminus, the 33-residue chain is Brevinin-2PTd (33 aa).

An intrachain disulfide couples C27 to C33.

As to expression, expressed by the skin glands.

Its subcellular location is the secreted. Has antibacterial activity against the Gram-positive bacterium S.aureus ATCC 25923 and the Gram-negative bacterium E.coli ATCC 25726. In Pulchrana picturata (Malaysian fire frog), this protein is Brevinin-2PTd.